The following is a 602-amino-acid chain: SAGA complex subunit SPT8 (602 aa).

Residues 1 to 141 (MDEVDDILIN…REASSSTHEA (141 aa)) are disordered. Acidic residues-rich tracts occupy residues 14-23 (VDDEEDDEEM) and 36-75 (EGND…DGED). T85 carries the post-translational modification Phosphothreonine. 3 positions are modified to phosphoserine: S108, S123, and S131. 2 WD repeats span residues 173-212 (PIQT…EGKL) and 305-346 (GHTQ…NEFK). The tract at residues 366-418 (VSGNVNSGKENENADDDMDSLFGDEDEDEKQDAGNEPVETGDGSNGEENKEQI) is disordered. Acidic residues predominate over residues 378–395 (NADDDMDSLFGDEDEDEK). WD repeat units lie at residues 415-454 (KEQI…SPAL), 506-544 (SISG…DASN), and 560-600 (HHGG…YDID). S451 carries the phosphoserine modification.

It belongs to the WD repeat SPT8 family. In terms of assembly, component of the 1.8 MDa SAGA (Spt-Ada-Gcn5 acetyltransferase) complex, which is composed of 19 subunits TRA1, SPT7, TAF5, NGG1/ADA3, SGF73, SPT20/ADA5, SPT8, TAF12, TAF6, HFI1/ADA1, UBP8, GCN5, ADA2, SPT3, SGF29, TAF10, TAF9, SGF11 and SUS1. The SAGA complex is composed of 4 modules, namely the HAT (histone acetyltransferase) module (GCN5, ADA2, NGG1/ADA3 and SGF29), the DUB (deubiquitinating) module (UBP8, SGF11, SGF73 and SUS1), the core or TAF (TBP-associated factor) module (TAF5, TAF6, TAF9, TAF10 and TAF12), and the Tra1 or SPT (Suppressor of Ty) module (TRA1, HFI1/ADA1, SPT3, SPT7, SPT8 and SPT20/ADA5). The Tra1/SPT module binds activators, the core module recruits TBP (TATA-binding protein), the HAT module contains the histone H3 acetyltransferase GCN5, and the DUB module comprises the histone H2B deubiquitinase UBP8.

Its subcellular location is the nucleus. Its function is as follows. Component of the transcription coactivator SAGA complex. SAGA acts as a general cofactor required for essentially all RNA polymerase II transcription. At the promoters, SAGA is required for transcription pre-initiation complex (PIC) recruitment. It influences RNA polymerase II transcriptional activity through different activities such as TBP interaction (via core/TAF module) and promoter selectivity, interaction with transcription activators (via Tra1/SPT module), and chromatin modification through histone acetylation (via HAT module) and deubiquitination (via DUB module). SAGA preferentially acetylates histones H3 (to form H3K9ac, H3K14ac, H3K18ac and H3K23ac) and H2B and deubiquitinates histone H2B. SAGA interacts with DNA via upstream activating sequences (UASs). During SAGA-mediated transcriptional inhibition, SPT3 and SPT8 prevent binding of TBP to the TATA box. In Saccharomyces cerevisiae (strain ATCC 204508 / S288c) (Baker's yeast), this protein is SAGA complex subunit SPT8 (SPT8).